The chain runs to 751 residues: Probable alpha-galactosidase C (751 aa).

The signal sequence occupies residues 1–27 (MFGSPKRAALAAASLLAVFGNGPSVMA). N49, N57, N162, N186, N194, N366, N433, N452, and N500 each carry an N-linked (GlcNAc...) asparagine glycan. The Nucleophile role is filled by D510. The active-site Proton donor is the D572. A glycan (N-linked (GlcNAc...) asparagine) is linked at N720.

The protein belongs to the glycosyl hydrolase 36 family. In terms of assembly, homotetramer. Mg(2+) is required as a cofactor. Requires NAD(+) as cofactor.

The protein localises to the secreted. It carries out the reaction Hydrolysis of terminal, non-reducing alpha-D-galactose residues in alpha-D-galactosides, including galactose oligosaccharides, galactomannans and galactolipids.. Its function is as follows. Hydrolyzes a variety of simple alpha-D-galactoside as well as more complex molecules such as oligosaccharides and polysaccharides. The chain is Probable alpha-galactosidase C (aglC) from Aspergillus oryzae (strain ATCC 42149 / RIB 40) (Yellow koji mold).